A 113-amino-acid chain; its full sequence is Protein MGF 110-2L (113 aa).

Positions 1–31 are cleaved as a signal peptide; that stretch reads MGFFSYLGLVLVGLASLTSLASLANLQDFST.

Belongs to the asfivirus MGF 110 family.

Plays a role in virus cell tropism, and may be required for efficient virus replication in macrophages. This African swine fever virus (isolate Pig/Kenya/KEN-50/1950) (ASFV) protein is Protein MGF 110-2L.